The primary structure comprises 120 residues: Protein TCL1B4 (120 aa).

This sequence belongs to the TCL1 family.

This is Protein TCL1B4 (Tcl1b4) from Mus musculus (Mouse).